A 748-amino-acid polypeptide reads, in one-letter code: Catalase-peroxidase (748 aa).

A cross-link (tryptophyl-tyrosyl-methioninium (Trp-Tyr) (with M-264)) is located at residues Trp-92–Tyr-238. Catalysis depends on His-93, which acts as the Proton acceptor. Residues Tyr-238 to Met-264 constitute a cross-link (tryptophyl-tyrosyl-methioninium (Tyr-Met) (with W-92)). Residue His-279 coordinates heme b.

Belongs to the peroxidase family. Peroxidase/catalase subfamily. Homodimer or homotetramer. The cofactor is heme b. Formation of the three residue Trp-Tyr-Met cross-link is important for the catalase, but not the peroxidase activity of the enzyme.

The enzyme catalyses H2O2 + AH2 = A + 2 H2O. The catalysed reaction is 2 H2O2 = O2 + 2 H2O. Its function is as follows. Bifunctional enzyme with both catalase and broad-spectrum peroxidase activity. This Xanthomonas axonopodis pv. citri (strain 306) protein is Catalase-peroxidase.